A 159-amino-acid polypeptide reads, in one-letter code: Probable cyclic pyranopterin monophosphate synthase (159 aa).

Residues 75–77 (LCH) and 111–112 (ME) each bind substrate. D126 is an active-site residue.

The protein belongs to the MoaC family. In terms of assembly, homohexamer; trimer of dimers.

It carries out the reaction (8S)-3',8-cyclo-7,8-dihydroguanosine 5'-triphosphate = cyclic pyranopterin phosphate + diphosphate. It participates in cofactor biosynthesis; molybdopterin biosynthesis. Its function is as follows. Catalyzes the conversion of (8S)-3',8-cyclo-7,8-dihydroguanosine 5'-triphosphate to cyclic pyranopterin monophosphate (cPMP). In Pyrococcus horikoshii (strain ATCC 700860 / DSM 12428 / JCM 9974 / NBRC 100139 / OT-3), this protein is Probable cyclic pyranopterin monophosphate synthase.